The primary structure comprises 147 residues: Small ribosomal subunit protein bS6 (147 aa).

Basic and acidic residues predominate over residues 97–141 (EEGPSAMMRKADRDRERDDRGGGFRGDREGGFRGDRGPRRPREEA). The segment at 97 to 147 (EEGPSAMMRKADRDRERDDRGGGFRGDREGGFRGDRGPRRPREEAPAVVEE) is disordered.

Belongs to the bacterial ribosomal protein bS6 family.

In terms of biological role, binds together with bS18 to 16S ribosomal RNA. The polypeptide is Small ribosomal subunit protein bS6 (Nitrobacter hamburgensis (strain DSM 10229 / NCIMB 13809 / X14)).